A 92-amino-acid chain; its full sequence is Acylphosphatase (92 aa).

The 86-residue stretch at 5-90 folds into the Acylphosphatase-like domain; that stretch reads TYRLVICGLV…GDFVGFQLRE (86 aa). Residues R20 and N38 contribute to the active site.

Belongs to the acylphosphatase family.

It carries out the reaction an acyl phosphate + H2O = a carboxylate + phosphate + H(+). The polypeptide is Acylphosphatase (acyP) (Albidiferax ferrireducens (strain ATCC BAA-621 / DSM 15236 / T118) (Rhodoferax ferrireducens)).